A 682-amino-acid chain; its full sequence is Acyl-CoA synthetase short-chain family member 3, mitochondrial (682 aa).

A mitochondrion-targeting transit peptide spans 1-29 (MKPSWLQCRKVTGAGTLGAPLPGSPSVRG). Position 222–225 (222–225 (EPGR)) interacts with CoA. ATP is bound by residues 420 to 422 (GER) and 441 to 446 (DHWWQT). Lys-513 carries the N6-succinyllysine modification. Residue Lys-519 is modified to N6-acetyllysine. ATP-binding residues include Asp-534, Arg-549, and Arg-560. Position 619 (Arg-619) interacts with CoA.

This sequence belongs to the ATP-dependent AMP-binding enzyme family.

It localises to the mitochondrion matrix. It carries out the reaction acetate + ATP + CoA = acetyl-CoA + AMP + diphosphate. It catalyses the reaction propanoate + ATP + CoA = propanoyl-CoA + AMP + diphosphate. The enzyme catalyses butanoate + ATP + CoA = butanoyl-CoA + AMP + diphosphate. Catalyzes the synthesis of acetyl-CoA from short-chain fatty acids. Propionate is the preferred substrate but can also utilize acetate and butyrate with a much lower affinity. This is Acyl-CoA synthetase short-chain family member 3, mitochondrial (Acss3) from Mus musculus (Mouse).